Here is a 174-residue protein sequence, read N- to C-terminus: Ubiquitin-like protein 4B (174 aa).

Positions 1–76 (MFLTVKLLLG…INVIMQPLEK (76 aa)) constitute a Ubiquitin-like domain. The span at 141 to 156 (EPHVEPAGERELEAKA) shows a compositional bias: basic and acidic residues. Residues 141–174 (EPHVEPAGERELEAKARPQSSCDMEEKEEAAADQ) are disordered. A compositionally biased stretch (acidic residues) spans 163-174 (DMEEKEEAAADQ).

It is found in the cytoplasm. This is Ubiquitin-like protein 4B (UBL4B) from Homo sapiens (Human).